Reading from the N-terminus, the 634-residue chain is Chaperone protein dnaK2 (634 aa).

Threonine 197 carries the phosphothreonine; by autocatalysis modification. A disordered region spans residues 592-634 (IGSSVYQQPGNQPPAPGTPDSNESNDKGGDDDVIDADFTETKD). Acidic residues predominate over residues 622-634 (DDVIDADFTETKD).

It belongs to the heat shock protein 70 family.

Acts as a chaperone. The protein is Chaperone protein dnaK2 (dnaK2) of Prochlorococcus marinus subsp. pastoris (strain CCMP1986 / NIES-2087 / MED4).